We begin with the raw amino-acid sequence, 88 residues long: Elongation factor 1-beta (88 aa).

This sequence belongs to the EF-1-beta/EF-1-delta family.

In terms of biological role, promotes the exchange of GDP for GTP in EF-1-alpha/GDP, thus allowing the regeneration of EF-1-alpha/GTP that could then be used to form the ternary complex EF-1-alpha/GTP/AAtRNA. In Methanosphaera stadtmanae (strain ATCC 43021 / DSM 3091 / JCM 11832 / MCB-3), this protein is Elongation factor 1-beta.